Consider the following 109-residue polypeptide: Large ribosomal subunit protein uL24 (109 aa).

The protein belongs to the universal ribosomal protein uL24 family. Part of the 50S ribosomal subunit.

Functionally, one of two assembly initiator proteins, it binds directly to the 5'-end of the 23S rRNA, where it nucleates assembly of the 50S subunit. Its function is as follows. One of the proteins that surrounds the polypeptide exit tunnel on the outside of the subunit. This Desulforapulum autotrophicum (strain ATCC 43914 / DSM 3382 / VKM B-1955 / HRM2) (Desulfobacterium autotrophicum) protein is Large ribosomal subunit protein uL24.